Here is a 438-residue protein sequence, read N- to C-terminus: Keratin, type I cytoskeletal 18 (438 aa).

The head stretch occupies residues 4–83; sequence AVSSRSTVVS…TLSGNAVISN (80 aa). Positions 84–119 are coil 1A; it reads EKETMQDLNDRLSNYLETVRRLENANQQLEIQIREA. An IF rod domain is found at 84–395; sequence EKETMQDLND…HLLGGEDSDT (312 aa). The interval 120-136 is linker 1; it reads MEKRGPSVRDYSNYEKI. The segment at 137–228 is coil 1B; that stretch reads IKELRDQIYD…KNHEDEVIAL (92 aa). The linker 12 stretch occupies residues 229–252; that stretch reads RNQVNSCGVQVDLDAPKGTDLAEI. Residues 253-393 are coil 2; that stretch reads MATLRAEYEA…YRHLLGGEDS (141 aa). Residues 394–438 form a tail region; the sequence is DTLSLQDALSAMKVSNVQTVQKIVVTTQKLVDGKVVEDSTVTETK.

It belongs to the intermediate filament family. As to quaternary structure, heterotetramer of two type I and two type II keratins. Keratin-18 associates with keratin-8. Phosphorylated. Post-translationally, proteolytically cleaved by caspases during epithelial cell apoptosis. As to expression, expressed at low levels in skin.

Its function is as follows. When phosphorylated, plays a role in filament reorganization. The chain is Keratin, type I cytoskeletal 18 from Protopterus aethiopicus (Marbled lungfish).